The sequence spans 325 residues: Tetraacyldisaccharide 4'-kinase (325 aa).

58 to 65 (TVGGSGKT) is a binding site for ATP.

Belongs to the LpxK family.

The enzyme catalyses a lipid A disaccharide + ATP = a lipid IVA + ADP + H(+). The protein operates within glycolipid biosynthesis; lipid IV(A) biosynthesis; lipid IV(A) from (3R)-3-hydroxytetradecanoyl-[acyl-carrier-protein] and UDP-N-acetyl-alpha-D-glucosamine: step 6/6. Its function is as follows. Transfers the gamma-phosphate of ATP to the 4'-position of a tetraacyldisaccharide 1-phosphate intermediate (termed DS-1-P) to form tetraacyldisaccharide 1,4'-bis-phosphate (lipid IVA). This chain is Tetraacyldisaccharide 4'-kinase, found in Coxiella burnetii (strain RSA 331 / Henzerling II).